The primary structure comprises 1299 residues: MAP3K epsilon protein kinase 1 (1299 aa).

Positions 20–274 (YMLGDEIGKG…AKTLLSHPWI (255 aa)) constitute a Protein kinase domain. HEAT repeat units lie at residues 25–62 (EIGK…EDLN) and 86–125 (LKTK…TVYI). ATP-binding positions include 26 to 34 (IGKGAYGRV) and Lys49. Residue Asp144 is the Proton acceptor of the active site. Residues 218-256 (PYYDLQPMPALFRIVQDDSPPIPDSLSPDITDFLRQCFK) form an HEAT 3 repeat. Disordered stretches follow at residues 291–458 (IRYM…GNEL) and 483–509 (GKLN…DGGK). Over residues 374–385 (SSLQSSTCSISS) the composition is skewed to low complexity. 2 stretches are compositionally biased toward polar residues: residues 415 to 432 (ATKQ…QRSH) and 488 to 501 (ASAS…NQGD). 16 HEAT repeats span residues 532 to 570 (SNDG…LLPL), 611 to 649 (VFVT…DNID), 653 to 694 (NACL…SSSL), 698 to 736 (MFIA…VFKL), 743 to 780 (NDFC…SGQL), 781 to 820 (DQHE…PDGD), 868 to 900 (QPEQ…HIAG), 901 to 939 (LEKH…AASA), 955 to 994 (SDTS…ADTT), 998 to 1036 (YMCS…DPNC), 1043 to 1081 (ADAI…INKR), 1085 to 1122 (QAAE…ASRN), 1125 to 1164 (EQLR…NDNR), 1186 to 1210 (CPER…RINT), 1211 to 1249 (TLAV…HHPR), and 1279 to 1299 (QVLV…NTVL). The disordered stretch occupies residues 795 to 852 (VLKTRPGGGEEPSNSQRSDLYQPDGDRPRSSSAALDATEDVKQHHRISISSNRTSTDK).

It belongs to the protein kinase superfamily. Ser/Thr protein kinase family. Post-translationally, autophosphorylated. As to expression, expressed in both the sporophytic and the gametophytic tissues, especially in dividing cells.

Its subcellular location is the cytoplasm. The protein localises to the cytoskeleton. The protein resides in the microtubule organizing center. It localises to the nucleus. It is found in the nucleolus. Its subcellular location is the cell membrane. It carries out the reaction L-seryl-[protein] + ATP = O-phospho-L-seryl-[protein] + ADP + H(+). The enzyme catalyses L-threonyl-[protein] + ATP = O-phospho-L-threonyl-[protein] + ADP + H(+). Functionally, serine/threonine-protein kinase involved in the spatial and temporal control system organizing cortical activities in mitotic and postmitotic cells. Required for the normal functioning of the plasma membrane in developing pollen. Involved in the regulation of cell expansion and embryo development. This Brassica napus (Rape) protein is MAP3K epsilon protein kinase 1.